The sequence spans 176 residues: Protein OPG163 (176 aa).

A signal peptide spans Met-1 to Thr-14.

Belongs to the orthopoxvirus OPG163 family.

Its subcellular location is the host endosome. Its function is as follows. Mildly affects the expression of MHC class II molecules on the surface of host antigen presenting cells (APCs). The polypeptide is Protein OPG163 (OPG163) (Vaccinia virus (strain Western Reserve) (VACV)).